Reading from the N-terminus, the 464-residue chain is NADH dehydrogenase [ubiquinone] flavoprotein 1, mitochondrial (464 aa).

A mitochondrion-targeting transit peptide spans 1 to 20 (MLAARHFLGGLVPVRVSVRF). K81 carries the N6-acetyllysine; alternate modification. K81 carries the N6-succinyllysine; alternate modification. Position 87-96 (87-96 (GRGGAGFPTG)) interacts with NADH. K104 carries the post-translational modification N6-acetyllysine. 199–247 (RGAGAYICGEETALIESIEGKQGKPRLKPPFPADVGVFGCPTTVANVET) is a binding site for FMN. R257 is subject to Omega-N-methylarginine. At K375 the chain carries N6-acetyllysine. [4Fe-4S] cluster is bound by residues C379, C382, C385, and C425.

Belongs to the complex I 51 kDa subunit family. In terms of assembly, core subunit of respiratory chain NADH dehydrogenase (Complex I) which is composed of 45 different subunits. This is a component of the flavoprotein-sulfur (FP) fragment of the enzyme. Interacts with RAB5IF. FMN is required as a cofactor. The cofactor is [4Fe-4S] cluster.

The protein localises to the mitochondrion inner membrane. It carries out the reaction a ubiquinone + NADH + 5 H(+)(in) = a ubiquinol + NAD(+) + 4 H(+)(out). Functionally, core subunit of the mitochondrial membrane respiratory chain NADH dehydrogenase (Complex I) which catalyzes electron transfer from NADH through the respiratory chain, using ubiquinone as an electron acceptor. Part of the peripheral arm of the enzyme, where the electrons from NADH are accepted by flavin mononucleotide (FMN) and then passed along a chain of iron-sulfur clusters by electron tunnelling to the final acceptor ubiquinone. Contains FMN, which is the initial electron acceptor as well as one iron-sulfur cluster. This is NADH dehydrogenase [ubiquinone] flavoprotein 1, mitochondrial from Mus musculus (Mouse).